A 672-amino-acid chain; its full sequence is Peptidoglycan D,D-transpeptidase MrdA (672 aa).

A helical membrane pass occupies residues 21 to 41 (IFFAVGLVIICLLVLASRYAY). The active-site Acyl-ester intermediate is the serine 326. The Zn(2+) site is built by aspartate 350, aspartate 365, histidine 371, and cysteine 384. The segment at 616 to 672 (ANHQVNGGLMTAGIKPGELPSGNESASSTPATSAPTSAAASTPQATPTRPATNEVDE) is disordered. Over residues 640–672 (SASSTPATSAPTSAAASTPQATPTRPATNEVDE) the composition is skewed to low complexity.

It belongs to the transpeptidase family. MrdA subfamily. In terms of assembly, monomer. It depends on Zn(2+) as a cofactor.

It localises to the cell inner membrane. The catalysed reaction is Preferential cleavage: (Ac)2-L-Lys-D-Ala-|-D-Ala. Also transpeptidation of peptidyl-alanyl moieties that are N-acyl substituents of D-alanine.. The protein operates within cell wall biogenesis; peptidoglycan biosynthesis. Its activity is regulated as follows. Inhibited by the beta-lactams sulbactam and piperacillin-tazobactam. Catalyzes cross-linking of the peptidoglycan cell wall. Involved in the determination of the rod shape of the cell. The sequence is that of Peptidoglycan D,D-transpeptidase MrdA from Acinetobacter baumannii (strain ATCC 19606 / DSM 30007 / JCM 6841 / CCUG 19606 / CIP 70.34 / NBRC 109757 / NCIMB 12457 / NCTC 12156 / 81).